Here is a 507-residue protein sequence, read N- to C-terminus: Chromosomal replication initiator protein DnaA (507 aa).

The segment at 1 to 112 (MTDDPGSGFT…PATDEADDTT (112 aa)) is domain I, interacts with DnaA modulators. Positions 99–155 (RIAPPATDEADDTTVPPSENPATTSPDTTTDNDEIDDSAAARGDNQHSWPSYFTERP) are disordered. A compositionally biased stretch (polar residues) spans 113–127 (VPPSENPATTSPDTT). A domain II region spans residues 113–166 (VPPSENPATTSPDTTTDNDEIDDSAAARGDNQHSWPSYFTERPHNTDSATAGVT). The interval 167-383 (SLNRRYTFDT…GALIRVTAFA (217 aa)) is domain III, AAA+ region. ATP-binding residues include G211, G213, K214, and T215. Residues 384-507 (SLNKTPIDKA…TTRIRQRSKR (124 aa)) form a domain IV, binds dsDNA region.

It belongs to the DnaA family. Oligomerizes as a right-handed, spiral filament on DNA at oriC.

The protein resides in the cytoplasm. Its function is as follows. Plays an essential role in the initiation and regulation of chromosomal replication. ATP-DnaA binds to the origin of replication (oriC) to initiate formation of the DNA replication initiation complex once per cell cycle. Binds the DnaA box (a 9 base pair repeat at the origin) and separates the double-stranded (ds)DNA. Forms a right-handed helical filament on oriC DNA; dsDNA binds to the exterior of the filament while single-stranded (ss)DNA is stabiized in the filament's interior. The ATP-DnaA-oriC complex binds and stabilizes one strand of the AT-rich DNA unwinding element (DUE), permitting loading of DNA polymerase. After initiation quickly degrades to an ADP-DnaA complex that is not apt for DNA replication. Binds acidic phospholipids. In Mycobacterium tuberculosis (strain ATCC 25177 / H37Ra), this protein is Chromosomal replication initiator protein DnaA.